We begin with the raw amino-acid sequence, 436 residues long: Ribulose bisphosphate carboxylase large chain (436 aa).

N104 and T154 together coordinate substrate. The active-site Proton acceptor is the K156. Substrate is bound at residue K158. Mg(2+) contacts are provided by K182, D184, and E185. Position 182 is an N6-carboxylysine (K182). The active-site Proton acceptor is the H275. Substrate contacts are provided by R276, H308, and S360.

It belongs to the RuBisCO large chain family. Type I subfamily. As to quaternary structure, heterohexadecamer of 8 large chains and 8 small chains. The cofactor is Mg(2+).

The protein localises to the plastid. The protein resides in the chloroplast. The enzyme catalyses 2 (2R)-3-phosphoglycerate + 2 H(+) = D-ribulose 1,5-bisphosphate + CO2 + H2O. It catalyses the reaction D-ribulose 1,5-bisphosphate + O2 = 2-phosphoglycolate + (2R)-3-phosphoglycerate + 2 H(+). RuBisCO catalyzes two reactions: the carboxylation of D-ribulose 1,5-bisphosphate, the primary event in carbon dioxide fixation, as well as the oxidative fragmentation of the pentose substrate in the photorespiration process. Both reactions occur simultaneously and in competition at the same active site. This is Ribulose bisphosphate carboxylase large chain from Euglena stellata.